A 431-amino-acid polypeptide reads, in one-letter code: Citrate synthase 1 (431 aa).

Catalysis depends on residues His-309 and Asp-366.

The protein belongs to the citrate synthase family. In terms of assembly, homohexamer.

The catalysed reaction is oxaloacetate + acetyl-CoA + H2O = citrate + CoA + H(+). The protein operates within carbohydrate metabolism; tricarboxylic acid cycle; isocitrate from oxaloacetate: step 1/2. The polypeptide is Citrate synthase 1 (gltA2) (Mycobacterium tuberculosis (strain CDC 1551 / Oshkosh)).